The sequence spans 508 residues: WD repeat-containing protein JIP5 (508 aa).

6 WD repeats span residues 46–94 (LATG…GVET), 105–144 (RHKG…VVKK), 150–189 (GQNV…QTNL), 194–234 (HNGD…EGDF), 252–293 (DQED…LADQ), and 344–381 (SKLD…QLTP). The tract at residues 372 to 508 (DSEKSEQLTP…THGIRRFEGL (137 aa)) is disordered. Over residues 491–508 (IKPERSMKTHGIRRFEGL) the composition is skewed to basic and acidic residues.

This sequence belongs to the WD repeat WDR55 family.

It is found in the nucleus. It localises to the nucleolus. The sequence is that of WD repeat-containing protein JIP5 (JIP5) from Eremothecium gossypii (strain ATCC 10895 / CBS 109.51 / FGSC 9923 / NRRL Y-1056) (Yeast).